We begin with the raw amino-acid sequence, 303 residues long: N-acetyl-D-glucosamine kinase (303 aa).

ATP-binding positions include 4 to 11 (GFDIGGTK) and 133 to 140 (GVGGGLIF). Zn(2+) contacts are provided by His-157, Cys-177, Cys-179, and Cys-184.

The protein belongs to the ROK (NagC/XylR) family. NagK subfamily.

The enzyme catalyses N-acetyl-D-glucosamine + ATP = N-acetyl-D-glucosamine 6-phosphate + ADP + H(+). The protein operates within cell wall biogenesis; peptidoglycan recycling. Functionally, catalyzes the phosphorylation of N-acetyl-D-glucosamine (GlcNAc) derived from cell-wall degradation, yielding GlcNAc-6-P. The sequence is that of N-acetyl-D-glucosamine kinase from Escherichia coli O7:K1 (strain IAI39 / ExPEC).